Consider the following 129-residue polypeptide: Small ribosomal subunit protein uS8 (129 aa).

Belongs to the universal ribosomal protein uS8 family. In terms of assembly, part of the 30S ribosomal subunit.

One of the primary rRNA binding proteins, it binds directly to 16S rRNA central domain where it helps coordinate assembly of the platform of the 30S subunit. This is Small ribosomal subunit protein uS8 from Thermoplasma volcanium (strain ATCC 51530 / DSM 4299 / JCM 9571 / NBRC 15438 / GSS1).